A 205-amino-acid chain; its full sequence is dTTP/UTP pyrophosphatase (205 aa).

Residue Asp81 is the Proton acceptor of the active site.

The protein belongs to the Maf family. YhdE subfamily. The cofactor is a divalent metal cation.

The protein resides in the cytoplasm. It catalyses the reaction dTTP + H2O = dTMP + diphosphate + H(+). It carries out the reaction UTP + H2O = UMP + diphosphate + H(+). Functionally, nucleoside triphosphate pyrophosphatase that hydrolyzes dTTP and UTP. May have a dual role in cell division arrest and in preventing the incorporation of modified nucleotides into cellular nucleic acids. In Agathobacter rectalis (strain ATCC 33656 / DSM 3377 / JCM 17463 / KCTC 5835 / VPI 0990) (Eubacterium rectale), this protein is dTTP/UTP pyrophosphatase.